The chain runs to 431 residues: Glucose-1-phosphate adenylyltransferase (431 aa).

A beta-D-fructose 1,6-bisphosphate-binding site is contributed by Lys39. AMP contacts are provided by Arg40, His46, and Arg52. Alpha-D-glucose 1-phosphate is bound at residue Tyr114. Arg130 lines the AMP pocket. Alpha-D-glucose 1-phosphate is bound by residues Gly179, 194-195, and Ser212; that span reads EK. Glu370 and Arg386 together coordinate AMP. Beta-D-fructose 1,6-bisphosphate contacts are provided by residues 419–423 and 429–431; these read REMLR and QER.

It belongs to the bacterial/plant glucose-1-phosphate adenylyltransferase family. In terms of assembly, homotetramer.

It carries out the reaction alpha-D-glucose 1-phosphate + ATP + H(+) = ADP-alpha-D-glucose + diphosphate. It functions in the pathway glycan biosynthesis; glycogen biosynthesis. Its activity is regulated as follows. Allosterically activated by fructose-1,6-bisphosphate (F16BP) and inhibited by AMP. Its function is as follows. Involved in the biosynthesis of ADP-glucose, a building block required for the elongation reactions to produce glycogen. Catalyzes the reaction between ATP and alpha-D-glucose 1-phosphate (G1P) to produce pyrophosphate and ADP-Glc. This chain is Glucose-1-phosphate adenylyltransferase, found in Salmonella paratyphi A (strain ATCC 9150 / SARB42).